The following is a 468-amino-acid chain: UDP-N-acetylmuramoylalanine--D-glutamate ligase (468 aa).

127-133 (GTNGKTT) is a binding site for ATP.

Belongs to the MurCDEF family.

It localises to the cytoplasm. The catalysed reaction is UDP-N-acetyl-alpha-D-muramoyl-L-alanine + D-glutamate + ATP = UDP-N-acetyl-alpha-D-muramoyl-L-alanyl-D-glutamate + ADP + phosphate + H(+). The protein operates within cell wall biogenesis; peptidoglycan biosynthesis. Its function is as follows. Cell wall formation. Catalyzes the addition of glutamate to the nucleotide precursor UDP-N-acetylmuramoyl-L-alanine (UMA). The chain is UDP-N-acetylmuramoylalanine--D-glutamate ligase from Prochlorococcus marinus (strain MIT 9312).